A 1940-amino-acid polypeptide reads, in one-letter code: Myosin-2 (1940 aa).

The Myosin N-terminal SH3-like domain maps to aspartate 33 to proline 82. Threonine 64 and threonine 69 each carry phosphothreonine. In terms of domain architecture, Myosin motor spans aspartate 86–aspartate 783. An N6,N6,N6-trimethyllysine modification is found at lysine 130. Glycine 179–threonine 186 is a binding site for ATP. Tyrosine 389 carries the phosphotyrosine modification. Serine 392 carries the phosphoserine modification. Residue threonine 419 is modified to Phosphothreonine. Serine 625 is subject to Phosphoserine. The segment at leucine 660–glutamate 682 is actin-binding. A Pros-methylhistidine modification is found at histidine 758. An actin-binding region spans residues lysine 762–glycine 776. The region spanning leucine 786–serine 815 is the IQ domain. A coiled-coil region spans residues leucine 844–glutamate 1940. Residues serine 1093, serine 1097, serine 1163, and serine 1238 each carry the phosphoserine modification. Residue threonine 1242 is modified to Phosphothreonine. A Phosphoserine modification is found at serine 1244. Phosphothreonine occurs at positions 1256 and 1287. A phosphoserine mark is found at serine 1289, serine 1293, serine 1304, and serine 1307. Position 1465 is a phosphotyrosine (tyrosine 1465). Phosphothreonine is present on threonine 1468. Position 1493 is a phosphotyrosine (tyrosine 1493). Residue serine 1496 is modified to Phosphoserine. Threonine 1502 is modified (phosphothreonine). Serine 1515 is subject to Phosphoserine. At threonine 1518 the chain carries Phosphothreonine. Serine 1543, serine 1555, serine 1575, serine 1601, serine 1715, and serine 1727 each carry phosphoserine. A phosphothreonine mark is found at threonine 1731 and threonine 1737. Residues glutamine 1886–glutamine 1905 form a disordered region.

Belongs to the TRAFAC class myosin-kinesin ATPase superfamily. Myosin family. As to quaternary structure, muscle myosin is a hexameric protein that consists of 2 heavy chain subunits (MHC), 2 alkali light chain subunits (MLC) and 2 regulatory light chain subunits (MLC-2). Interacts with GCSAM.

It is found in the cytoplasm. The protein resides in the myofibril. Its function is as follows. Myosins are actin-based motor molecules with ATPase activity essential for muscle contraction. The protein is Myosin-2 (MYH2) of Bos taurus (Bovine).